The following is a 314-amino-acid chain: DNA-directed RNA polymerase subunit alpha (314 aa).

An alpha N-terminal domain (alpha-NTD) region spans residues 1-228 (MIEIEKPRIE…EHLNIFVGLT (228 aa)). Residues 245 to 314 (KEKVLEMSIE…DLGLGLRKED (70 aa)) form an alpha C-terminal domain (alpha-CTD) region.

This sequence belongs to the RNA polymerase alpha chain family. Homodimer. The RNAP catalytic core consists of 2 alpha, 1 beta, 1 beta' and 1 omega subunit. When a sigma factor is associated with the core the holoenzyme is formed, which can initiate transcription.

The catalysed reaction is RNA(n) + a ribonucleoside 5'-triphosphate = RNA(n+1) + diphosphate. DNA-dependent RNA polymerase catalyzes the transcription of DNA into RNA using the four ribonucleoside triphosphates as substrates. The sequence is that of DNA-directed RNA polymerase subunit alpha from Staphylococcus aureus (strain bovine RF122 / ET3-1).